The sequence spans 423 residues: Ferrochelatase, mitochondrial (423 aa).

Residues Met-1–Gln-54 constitute a mitochondrion transit peptide. At Lys-57 the chain carries N6-acetyllysine. The protoporphyrin IX site is built by Arg-115, Tyr-123, and Ser-130. Residue Lys-138 is modified to N6-succinyllysine. Position 196 (Cys-196) interacts with [2Fe-2S] cluster. Catalysis depends on residues His-230 and Asp-383. Cys-403, Cys-406, and Cys-411 together coordinate [2Fe-2S] cluster. At Lys-415 the chain carries N6-acetyllysine; alternate. At Lys-415 the chain carries N6-succinyllysine; alternate.

It belongs to the ferrochelatase family. In terms of assembly, homodimer. Homotetramer. Interaction with PGRMC1; the interaction results in decreased FECH activity. Interacts with ABCB10 and SLC25A37; this interaction forms an oligomeric complex. Forms a complex with ABCB7 and ABCB10, where a dimeric FECH bridges ABCB7 and ABCB10 homodimers; this complex may be required for cellular iron homeostasis, mitochondrial function and heme biosynthesis. Interacts with ABCB7 and ABCB10. The cofactor is [2Fe-2S] cluster.

The protein localises to the mitochondrion inner membrane. The catalysed reaction is heme b + 2 H(+) = protoporphyrin IX + Fe(2+). It participates in porphyrin-containing compound metabolism; protoheme biosynthesis; protoheme from protoporphyrin-IX: step 1/1. In terms of biological role, catalyzes the ferrous insertion into protoporphyrin IX and participates in the terminal step in the heme biosynthetic pathway. The protein is Ferrochelatase, mitochondrial of Pan troglodytes (Chimpanzee).